The chain runs to 138 residues: MITFFEKLSTFCHNLTPTECKVSVISFFLLAFLLMAHIWLSWFSNNQHCLRTMRHLEKLKIPYEFQYGWLGVKITIKSNVPNDEVTKKVSPIIKGEIEGKEEKKEGKGEIEGKEEKKEGKGEIEGKEEKKEVENGPRK.

Residues 19–40 traverse the membrane as a helical segment; it reads ECKVSVISFFLLAFLLMAHIWL. Repeat copies occupy residues 94–106, 107–119, and 120–132. The segment at 94-132 is 3 X 13 AA tandem repeats of K-G-E-I-E-G-K-E-E-K-K-E-[GV]; the sequence is KGEIEGKEEKKEGKGEIEGKEEKKEGKGEIEGKEEKKEV. Residues 98–138 are disordered; that stretch reads EGKEEKKEGKGEIEGKEEKKEGKGEIEGKEEKKEVENGPRK.

In terms of tissue distribution, expressed in roots, leaves and flowers.

It localises to the mitochondrion membrane. Functionally, involved in cytoplasmic male sterility (CMS) by leading to pollen abortion. Not expressed in fertile (normal) plants. This is an uncharacterized protein from Raphanus sativus (Radish).